Consider the following 464-residue polypeptide: Signal recognition particle 54 kDa protein (464 aa).

GTP contacts are provided by residues 104 to 111, 184 to 188, and 242 to 245; these read GLQGSGKT, DTAGR, and TKLD.

Belongs to the GTP-binding SRP family. SRP54 subfamily. In terms of assembly, part of the signal recognition particle protein translocation system, which is composed of SRP and FtsY. Archaeal SRP consists of a 7S RNA molecule of 300 nucleotides and two protein subunits: SRP54 and SRP19.

It is found in the cytoplasm. The enzyme catalyses GTP + H2O = GDP + phosphate + H(+). Functionally, involved in targeting and insertion of nascent membrane proteins into the cytoplasmic membrane. Binds to the hydrophobic signal sequence of the ribosome-nascent chain (RNC) as it emerges from the ribosomes. The SRP-RNC complex is then targeted to the cytoplasmic membrane where it interacts with the SRP receptor FtsY. The sequence is that of Signal recognition particle 54 kDa protein from Halorubrum lacusprofundi (strain ATCC 49239 / DSM 5036 / JCM 8891 / ACAM 34).